Here is a 355-residue protein sequence, read N- to C-terminus: Tetraspanin-10 (355 aa).

The segment at 1 to 33 (MEEGERSPLLSQETAGQKPLSVHRPPTSGCLGP) is disordered. Residues 1–78 (MEEGERSPLL…LSPGSSCVKY (78 aa)) are Cytoplasmic-facing. Residues 79–99 (LIFLSNFPFSLLGLLALAIGL) form a helical membrane-spanning segment. The Extracellular segment spans residues 100-120 (WGLAVKGSLGSDLGGPLPTDP). A helical membrane pass occupies residues 121 to 141 (MLGLALGGLVVSAASLAGCLG). Topologically, residues 142-154 (ALCENTCLLRGFS) are cytoplasmic. Residues 155 to 175 (GGILAFLVLEAVAGALVVALW) traverse the membrane as a helical segment. The Extracellular segment spans residues 176 to 355 (GPLQDSLEHT…APPAAKPARG (180 aa)). Disulfide bonds link Cys-212/Cys-279, Cys-213/Cys-243, Cys-229/Cys-237, and Cys-244/Cys-258. The N-linked (GlcNAc...) asparagine glycan is linked to Asn-228. A disordered region spans residues 327–355 (YGPGAHGEDRAGPQSPSPGAPPAAKPARG). Over residues 341 to 355 (SPSPGAPPAAKPARG) the composition is skewed to pro residues.

Belongs to the tetraspanin (TM4SF) family. As to quaternary structure, interacts with ADAM10. Expressed in the eye, including iris, ciliary body, retinal pigment epithelium, but not lens (protein level).

Its subcellular location is the cell membrane. Functionally, part of TspanC8 subgroup, composed of 6 members that interact with the transmembrane metalloprotease ADAM10. This interaction is required for ADAM10 exit from the endoplasmic reticulum and for enzymatic maturation and trafficking to the cell surface as well as substrate specificity. Different TspanC8/ADAM10 complexes have distinct substrates. The chain is Tetraspanin-10 from Homo sapiens (Human).